The sequence spans 90 residues: uncharacterized protein (90 aa).

The N-terminal stretch at 1–21 (MFKFSIPLLLFIFLFFSCINS) is a signal peptide. The segment at 56-90 (SNEKLPERILSGSSGSCSSCSISSSNGSSSRSSKQ) is disordered. The segment covering 66–90 (SGSSGSCSSCSISSSNGSSSRSSKQ) has biased composition (low complexity). Residue N81 is glycosylated (N-linked (GlcNAc...) asparagine).

This is an uncharacterized protein from Dictyostelium discoideum (Social amoeba).